A 739-amino-acid polypeptide reads, in one-letter code: Phosphoribosylformylglycinamidine synthase subunit PurL (739 aa).

Histidine 54 is a catalytic residue. Residues tyrosine 57 and lysine 96 each coordinate ATP. Glutamate 98 contributes to the Mg(2+) binding site. Residues 99-102 (SHNH) and arginine 121 contribute to the substrate site. Histidine 100 (proton acceptor) is an active-site residue. Residue aspartate 122 participates in Mg(2+) binding. Glutamine 245 provides a ligand contact to substrate. Residue aspartate 273 participates in Mg(2+) binding. 317-319 (ESQ) lines the substrate pocket. ATP-binding residues include aspartate 500 and glycine 537. Asparagine 538 is a Mg(2+) binding site. Serine 540 serves as a coordination point for substrate.

Belongs to the FGAMS family. As to quaternary structure, monomer. Part of the FGAM synthase complex composed of 1 PurL, 1 PurQ and 2 PurS subunits.

The protein resides in the cytoplasm. The enzyme catalyses N(2)-formyl-N(1)-(5-phospho-beta-D-ribosyl)glycinamide + L-glutamine + ATP + H2O = 2-formamido-N(1)-(5-O-phospho-beta-D-ribosyl)acetamidine + L-glutamate + ADP + phosphate + H(+). Its pathway is purine metabolism; IMP biosynthesis via de novo pathway; 5-amino-1-(5-phospho-D-ribosyl)imidazole from N(2)-formyl-N(1)-(5-phospho-D-ribosyl)glycinamide: step 1/2. Part of the phosphoribosylformylglycinamidine synthase complex involved in the purines biosynthetic pathway. Catalyzes the ATP-dependent conversion of formylglycinamide ribonucleotide (FGAR) and glutamine to yield formylglycinamidine ribonucleotide (FGAM) and glutamate. The FGAM synthase complex is composed of three subunits. PurQ produces an ammonia molecule by converting glutamine to glutamate. PurL transfers the ammonia molecule to FGAR to form FGAM in an ATP-dependent manner. PurS interacts with PurQ and PurL and is thought to assist in the transfer of the ammonia molecule from PurQ to PurL. The chain is Phosphoribosylformylglycinamidine synthase subunit PurL from Bacillus cereus (strain AH187).